The chain runs to 298 residues: Acetylglutamate kinase (298 aa).

Substrate contacts are provided by residues 69–70, R91, and N196; that span reads GG.

The protein belongs to the acetylglutamate kinase family. ArgB subfamily.

Its subcellular location is the cytoplasm. It carries out the reaction N-acetyl-L-glutamate + ATP = N-acetyl-L-glutamyl 5-phosphate + ADP. Its pathway is amino-acid biosynthesis; L-arginine biosynthesis; N(2)-acetyl-L-ornithine from L-glutamate: step 2/4. In terms of biological role, catalyzes the ATP-dependent phosphorylation of N-acetyl-L-glutamate. The protein is Acetylglutamate kinase of Rhodopseudomonas palustris (strain BisB5).